A 393-amino-acid chain; its full sequence is Methylthioribose-1-phosphate isomerase (393 aa).

Asp-265 (proton donor) is an active-site residue.

It belongs to the eIF-2B alpha/beta/delta subunits family. MtnA subfamily.

Its subcellular location is the cytoplasm. It localises to the nucleus. The enzyme catalyses 5-(methylsulfanyl)-alpha-D-ribose 1-phosphate = 5-(methylsulfanyl)-D-ribulose 1-phosphate. The protein operates within amino-acid biosynthesis; L-methionine biosynthesis via salvage pathway; L-methionine from S-methyl-5-thio-alpha-D-ribose 1-phosphate: step 1/6. Functionally, catalyzes the interconversion of methylthioribose-1-phosphate (MTR-1-P) into methylthioribulose-1-phosphate (MTRu-1-P). The polypeptide is Methylthioribose-1-phosphate isomerase (Cryptococcus neoformans var. neoformans serotype D (strain B-3501A) (Filobasidiella neoformans)).